The following is a 149-amino-acid chain: Macrodomain Ter protein (149 aa).

This sequence belongs to the MatP family. In terms of assembly, homodimer.

It is found in the cytoplasm. Functionally, required for spatial organization of the terminus region of the chromosome (Ter macrodomain) during the cell cycle. Prevents early segregation of duplicated Ter macrodomains during cell division. Binds specifically to matS, which is a 13 bp signature motif repeated within the Ter macrodomain. The chain is Macrodomain Ter protein from Vibrio campbellii (strain ATCC BAA-1116).